The following is a 243-amino-acid chain: Probable 2-phosphosulfolactate phosphatase (243 aa).

This sequence belongs to the ComB family. Requires Mg(2+) as cofactor.

It carries out the reaction (2R)-O-phospho-3-sulfolactate + H2O = (2R)-3-sulfolactate + phosphate. The polypeptide is Probable 2-phosphosulfolactate phosphatase (Synechococcus sp. (strain CC9605)).